Consider the following 394-residue polypeptide: MVKRISILGSTGSIGTQTLDIVTHHPDAFQVVGLAAGGNVALLAQQVAEFRPEIVAIRQAEKLEDLKAAVAELTDYQPMYVVGEEGVVEVARYGDAESVVTGIVGCAGLLPTMAAIAAGKDIALANKETLIAGAPVVLPLVEKMGVKLLPADSEHSAIFQCLQGVPEGGLRRIILTASGGAFRDLPVERLPFVTVQDALKHPNWSMGQKITIDSATLMNKGLEVIEAHYLFGLDYDHIDIVIHPQSIIHSLIEVQDTSVLAQLGWPDMRLPLLYALSWPERIYTDWEPLDLVKAGSLSFREPDHDKYPCMQLAYGAGRAGGAMPAVLNAANEQAVALFLQEKISFLDIPRLIEKTCDLYVGQNTASPDLETILAADQWARRTVLENSACVATRP.

Positions 11, 12, 13, 14, 37, 39, and 126 each coordinate NADPH. 1-deoxy-D-xylulose 5-phosphate is bound at residue Lys-127. NADPH is bound at residue Glu-128. A Mn(2+)-binding site is contributed by Asp-152. 1-deoxy-D-xylulose 5-phosphate contacts are provided by Ser-153, Glu-154, Ser-178, and His-201. Position 154 (Glu-154) interacts with Mn(2+). Gly-207 lines the NADPH pocket. Ser-214, Asn-219, Lys-220, and Glu-223 together coordinate 1-deoxy-D-xylulose 5-phosphate. Glu-223 provides a ligand contact to Mn(2+).

It belongs to the DXR family. Requires Mg(2+) as cofactor. Mn(2+) serves as cofactor.

The catalysed reaction is 2-C-methyl-D-erythritol 4-phosphate + NADP(+) = 1-deoxy-D-xylulose 5-phosphate + NADPH + H(+). The protein operates within isoprenoid biosynthesis; isopentenyl diphosphate biosynthesis via DXP pathway; isopentenyl diphosphate from 1-deoxy-D-xylulose 5-phosphate: step 1/6. Catalyzes the NADPH-dependent rearrangement and reduction of 1-deoxy-D-xylulose-5-phosphate (DXP) to 2-C-methyl-D-erythritol 4-phosphate (MEP). In Synechocystis sp. (strain ATCC 27184 / PCC 6803 / Kazusa), this protein is 1-deoxy-D-xylulose 5-phosphate reductoisomerase.